The primary structure comprises 230 residues: Large ribosomal subunit protein uL1 (230 aa).

Belongs to the universal ribosomal protein uL1 family. As to quaternary structure, part of the 50S ribosomal subunit.

In terms of biological role, binds directly to 23S rRNA. The L1 stalk is quite mobile in the ribosome, and is involved in E site tRNA release. Protein L1 is also a translational repressor protein, it controls the translation of the L11 operon by binding to its mRNA. This chain is Large ribosomal subunit protein uL1, found in Limosilactobacillus reuteri subsp. reuteri (strain JCM 1112) (Lactobacillus reuteri).